The primary structure comprises 184 residues: UPF0301 protein ABSDF3201 (184 aa).

It belongs to the UPF0301 (AlgH) family.

This Acinetobacter baumannii (strain SDF) protein is UPF0301 protein ABSDF3201.